The following is a 398-amino-acid chain: MESSSPHHSHIVEVNVGKSDEERIIVASKVCGEAPCGFSDSKNASGDAHERSASMRKLCIAVVLCLVFMSVEVVGGIKANSLAILTDAAHLLSDVAAFAISLFSLWAAGWEATPRQTYGFFRIEILGALVSIQLIWLLTGILVYEAIIRIVTETSEVNGFLMFLVAAFGLVVNIIMAVLLGHDHGHSHGHGHGHGHDHHNHSHGVTVTTHHHHHDHEHGHSHGHGEDKHHAHGDVTEQLLDKSKTQVAAKEKRKRNINLQGAYLHVLGDSIQSVGVMIGGAIIWYNPEWKIVDLICTLAFSVIVLGTTINMIRNILEVLMESTPREIDATKLEKGLLEMEEVVAVHELHIWAITVGKVLLACHVNIRPEADADMVLNKVIDYIRREYNISHVTIQIER.

Residues 1 to 56 lie on the Cytoplasmic side of the membrane; it reads MESSSPHHSHIVEVNVGKSDEERIIVASKVCGEAPCGFSDSKNASGDAHERSASMR. Residues 57–77 traverse the membrane as a helical segment; sequence KLCIAVVLCLVFMSVEVVGGI. Residues 78 to 89 are Vacuolar-facing; sequence KANSLAILTDAA. Residues 90-110 traverse the membrane as a helical segment; sequence HLLSDVAAFAISLFSLWAAGW. Residues 111 to 122 are Cytoplasmic-facing; sequence EATPRQTYGFFR. A helical membrane pass occupies residues 123–143; sequence IEILGALVSIQLIWLLTGILV. At 144 to 159 the chain is on the vacuolar side; the sequence is YEAIIRIVTETSEVNG. Residues 160-180 traverse the membrane as a helical segment; sequence FLMFLVAAFGLVVNIIMAVLL. The Cytoplasmic portion of the chain corresponds to 181–263; that stretch reads GHDHGHSHGH…KRNINLQGAY (83 aa). Residues 182-232 are required for zinc-binding; the sequence is HDHGHSHGHGHGHGHDHHNHSHGVTVTTHHHHHDHEHGHSHGHGEDKHHAH. A disordered region spans residues 186 to 232; that stretch reads HSHGHGHGHGHDHHNHSHGVTVTTHHHHHDHEHGHSHGHGEDKHHAH. Basic residues predominate over residues 187 to 202; that stretch reads SHGHGHGHGHDHHNHS. Over residues 216–232 the composition is skewed to basic and acidic residues; it reads HEHGHSHGHGEDKHHAH. The chain crosses the membrane as a helical span at residues 264–284; sequence LHVLGDSIQSVGVMIGGAIIW. Residues 285–290 are Vacuolar-facing; that stretch reads YNPEWK. A helical transmembrane segment spans residues 291-311; that stretch reads IVDLICTLAFSVIVLGTTINM. The Cytoplasmic portion of the chain corresponds to 312-398; it reads IRNILEVLME…ISHVTIQIER (87 aa).

This sequence belongs to the cation diffusion facilitator (CDF) transporter (TC 2.A.4) family. SLC30A subfamily. In terms of tissue distribution, ubiquitously expressed at low levels.

The protein localises to the vacuole membrane. Its function is as follows. Mediates zinc accumulation in roots and confers resistance to zinc. Involved in sequestration of excess zinc in the cytoplasm into vacuoles to maintain zinc homeostasis. Can also transport cadmium with a low efficiency. The chain is Metal tolerance protein 1 from Arabidopsis thaliana (Mouse-ear cress).